A 161-amino-acid chain; its full sequence is Anaerobic nitrite reductase HB2 (161 aa).

One can recognise a Globin domain in the interval 5-154; the sequence is VFTEKQEALV…LALAIKAEMK (150 aa). The Homodimerization signature appears at 38 to 42; sequence EIAPA. 4 residues coordinate heme b: S48, K62, H66, and H101. Positions 108-120 match the Homodimerization motif; it reads DPHFEVVKEALVR.

The protein belongs to the plant globin family. In terms of assembly, homodimer. It depends on heme b as a cofactor.

The protein resides in the cytoplasm. The protein localises to the nucleus. The enzyme catalyses Fe(III)-heme b-[protein] + nitric oxide + H2O = Fe(II)-heme b-[protein] + nitrite + 2 H(+). In terms of biological role, phytoglobin that reduces nitrite to nitric oxide (NO) under anoxic conditions (e.g. during flooding or in waterlogged soil). May not function as an oxygen storage or transport protein. Has an unusually high affinity for O(2) through an hexacoordinate heme iron because of a very low dissociation constant. The chain is Anaerobic nitrite reductase HB2 from Brassica napus (Rape).